A 412-amino-acid polypeptide reads, in one-letter code: Putative pectate lyase 11 (412 aa).

An N-terminal signal peptide occupies residues 1–24 (MVSYSNNHFAYAFLLLLTIGNTLA). The Ca(2+) site is built by Asp210, Asp234, and Asp238. Residue Arg290 is part of the active site.

The protein belongs to the polysaccharide lyase 1 family. Ca(2+) serves as cofactor.

The catalysed reaction is Eliminative cleavage of (1-&gt;4)-alpha-D-galacturonan to give oligosaccharides with 4-deoxy-alpha-D-galact-4-enuronosyl groups at their non-reducing ends.. It participates in glycan metabolism; pectin degradation; 2-dehydro-3-deoxy-D-gluconate from pectin: step 2/5. This chain is Putative pectate lyase 11, found in Arabidopsis thaliana (Mouse-ear cress).